Here is a 432-residue protein sequence, read N- to C-terminus: Adenosylhomocysteinase (432 aa).

Position 2 is an N-acetylserine (serine 2). Substrate contacts are provided by threonine 57, aspartate 131, and glutamate 156. Phosphoserine is present on serine 183. The tract at residues 183–350 is NAD binding; the sequence is SVTKSKFDNL…EGRLVNLGCA (168 aa). Residues lysine 186 and aspartate 190 each contribute to the substrate site. N6-(2-hydroxyisobutyryl)lysine is present on lysine 186. The residue at position 193 (tyrosine 193) is a Phosphotyrosine.

The protein belongs to the adenosylhomocysteinase family. In terms of assembly, homotetramer. Interaction with AHCYL1. The cofactor is NAD(+).

It is found in the cytoplasm. Its subcellular location is the melanosome. It localises to the nucleus. The protein localises to the endoplasmic reticulum. The enzyme catalyses S-adenosyl-L-homocysteine + H2O = L-homocysteine + adenosine. It participates in amino-acid biosynthesis; L-homocysteine biosynthesis; L-homocysteine from S-adenosyl-L-homocysteine: step 1/1. In terms of biological role, catalyzes the hydrolysis of S-adenosyl-L-homocysteine to form adenosine and homocysteine. Binds copper ions. The protein is Adenosylhomocysteinase (AHCY) of Bos taurus (Bovine).